A 330-amino-acid polypeptide reads, in one-letter code: Aspartate--ammonia ligase (330 aa).

It belongs to the class-II aminoacyl-tRNA synthetase family. AsnA subfamily.

The protein localises to the cytoplasm. The catalysed reaction is L-aspartate + NH4(+) + ATP = L-asparagine + AMP + diphosphate + H(+). It participates in amino-acid biosynthesis; L-asparagine biosynthesis; L-asparagine from L-aspartate (ammonia route): step 1/1. This is Aspartate--ammonia ligase from Escherichia coli (strain SMS-3-5 / SECEC).